Reading from the N-terminus, the 165-residue chain is 2-C-methyl-D-erythritol 2,4-cyclodiphosphate synthase (165 aa).

A divalent metal cation-binding residues include Asp-9 and His-11. 4-CDP-2-C-methyl-D-erythritol 2-phosphate contacts are provided by residues 9 to 11 (DVH) and 35 to 36 (HS). His-43 contributes to the a divalent metal cation binding site. 4-CDP-2-C-methyl-D-erythritol 2-phosphate contacts are provided by residues 57-59 (DIG), 101-107 (AQAPKML), 133-136 (TTTE), Phe-140, and Arg-143.

Belongs to the IspF family. As to quaternary structure, homotrimer. The cofactor is a divalent metal cation.

The enzyme catalyses 4-CDP-2-C-methyl-D-erythritol 2-phosphate = 2-C-methyl-D-erythritol 2,4-cyclic diphosphate + CMP. It functions in the pathway isoprenoid biosynthesis; isopentenyl diphosphate biosynthesis via DXP pathway; isopentenyl diphosphate from 1-deoxy-D-xylulose 5-phosphate: step 4/6. Functionally, involved in the biosynthesis of isopentenyl diphosphate (IPP) and dimethylallyl diphosphate (DMAPP), two major building blocks of isoprenoid compounds. Catalyzes the conversion of 4-diphosphocytidyl-2-C-methyl-D-erythritol 2-phosphate (CDP-ME2P) to 2-C-methyl-D-erythritol 2,4-cyclodiphosphate (ME-CPP) with a corresponding release of cytidine 5-monophosphate (CMP). In Pseudoalteromonas translucida (strain TAC 125), this protein is 2-C-methyl-D-erythritol 2,4-cyclodiphosphate synthase.